A 552-amino-acid chain; its full sequence is Ferry endosomal RAB5 effector complex subunit 3 (552 aa).

The tract at residues 383–403 (LKESLDSGNQNGGNDDKTKNA) is disordered.

In terms of assembly, component of the FERRY complex composed of five subunits, TBCK, PPP1R21, FERRY3, CRYZL1 and GATD1 with a ratio of 1:2:1:2:4, respectively.

The protein resides in the cytoplasm. It is found in the early endosome. Functionally, component of the FERRY complex (Five-subunit Endosomal Rab5 and RNA/ribosome intermediary). The FERRY complex directly interacts with mRNAs and RAB5A, and functions as a RAB5A effector involved in the localization and the distribution of specific mRNAs most likely by mediating their endosomal transport. The complex recruits mRNAs and ribosomes to early endosomes through direct mRNA-interaction. Plays a role in mast cell degranulation. In Homo sapiens (Human), this protein is Ferry endosomal RAB5 effector complex subunit 3.